A 273-amino-acid chain; its full sequence is 2,3,4,5-tetrahydropyridine-2,6-dicarboxylate N-succinyltransferase (273 aa).

Substrate is bound by residues arginine 106 and aspartate 143.

The protein belongs to the transferase hexapeptide repeat family. In terms of assembly, homotrimer.

It is found in the cytoplasm. It carries out the reaction (S)-2,3,4,5-tetrahydrodipicolinate + succinyl-CoA + H2O = (S)-2-succinylamino-6-oxoheptanedioate + CoA. Its pathway is amino-acid biosynthesis; L-lysine biosynthesis via DAP pathway; LL-2,6-diaminopimelate from (S)-tetrahydrodipicolinate (succinylase route): step 1/3. The protein is 2,3,4,5-tetrahydropyridine-2,6-dicarboxylate N-succinyltransferase of Wolbachia sp. subsp. Brugia malayi (strain TRS).